The sequence spans 295 residues: Delta-1-pyrroline-5-carboxylate reductase apf3 (295 aa).

Belongs to the pyrroline-5-carboxylate reductase family.

It participates in secondary metabolite biosynthesis. In terms of biological role, delta-1-pyrroline-5-carboxylate reductase; part of the gene cluster that mediates the biosynthesis of the cyclic tetrapeptide apicidin F (APF). The non-ribosomal peptide synthetase apf1 incorporates four different amino acids to produce apicidin F: L-phenylalanine, D-pipecolic acid (D-pip), N-methoxy-L-tryptophan and L-2-aminooctanedioic acid. L-Phenylalanine is the only proteinogenic amino acid directly used by apf1. The 3 other apf1 substrates are non-proteinogenic and have to be modified by other enzymes of the cluster. Lysine is converted to delta-1-pyrroline-5-carboxylate (P5C) which is reduced to L-pipecolic acid (L-pip) by apf3. L-pip is epimerized to D-pip, probably by apf1 activity, prior to incorporation. L-Tryptophan is N-oxidyzed by one of the cytochrome P450 monooxygenases (apf7 or apf8), and further methylated at the hydroxy group by the O-methyltransferase apf6 to yield N-methoxy-L-tryptophan. The synthesis of the fourth apf1 substrate is more complex. The fatty acid synthase apf5 is involved in the synthesis of the octanoic acid backbone of L-2-aminooctanedioic acid by fixing one acetyl-CoA unit and three malonyl-CoA units. Then one of the cytochrome P450 monooxygenases (apf7 or apf8) may oxidize this backbone to 2-oxooctanoic acid. The aminotransferase apf4 is predicted to catalyze the exchange of the keto group with an amino group. The next step would be the oxidation of 2-aminooctanoic acid by one of the cytochrome P450 monooxygenases (apf7 or apf8). The last step is the oxidation of 2-amino-8-hydroxyoctanoic acid to 2-aminooctanedioic acid is catalyzed by the FAD-dependent monooxygenase apf9. This chain is Delta-1-pyrroline-5-carboxylate reductase apf3, found in Gibberella fujikuroi (strain CBS 195.34 / IMI 58289 / NRRL A-6831) (Bakanae and foot rot disease fungus).